A 927-amino-acid polypeptide reads, in one-letter code: Protein unc-45 homolog B (927 aa).

TPR repeat units follow at residues 4–37 (PVQL…ITDK), 41–74 (AVLY…DASD), and 76–108 (KALF…EPKN). ARM repeat units follow at residues 167–206 (DAGA…GMCT), 209–248 (RARA…NIVD), and 746–785 (DKLR…NLAV).

The protein localises to the cytoplasm. It localises to the myofibril. Its subcellular location is the sarcomere. The protein resides in the z line. It is found in the a band. The protein localises to the perinuclear region. It localises to the cytosol. In terms of biological role, acts as a co-chaperone for HSP90 and is required for proper folding of the myosin motor domain. Plays a role in sarcomere formation during muscle cell assembly. Is necessary for normal early lens development. The chain is Protein unc-45 homolog B from Xenopus laevis (African clawed frog).